We begin with the raw amino-acid sequence, 215 residues long: Cytochrome c biogenesis ATP-binding export protein CcmA (215 aa).

One can recognise an ABC transporter domain in the interval 12–215 (LAAHALTYSR…TRLLHLQKAP (204 aa)). Residue 44 to 51 (GPNGIGKT) participates in ATP binding.

This sequence belongs to the ABC transporter superfamily. CcmA exporter (TC 3.A.1.107) family. As to quaternary structure, the complex is composed of two ATP-binding proteins (CcmA) and two transmembrane proteins (CcmB).

It is found in the cell inner membrane. It carries out the reaction heme b(in) + ATP + H2O = heme b(out) + ADP + phosphate + H(+). Its function is as follows. Part of the ABC transporter complex CcmAB involved in the biogenesis of c-type cytochromes; once thought to export heme, this seems not to be the case, but its exact role is uncertain. Responsible for energy coupling to the transport system. In Xylella fastidiosa (strain Temecula1 / ATCC 700964), this protein is Cytochrome c biogenesis ATP-binding export protein CcmA.